A 419-amino-acid chain; its full sequence is Peroxisomal membrane protein PMP47B (419 aa).

3 Solcar repeats span residues 6 to 120 (YDDL…TGKT), 142 to 230 (LSVW…LKSF), and 239 to 369 (VTPV…LLIL). A helical transmembrane segment spans residues 12–32 (AFAGAGGGLLSMTLTYPLVTL). Basic and acidic residues predominate over residues 44-53 (KNEEEEKENS). The interval 44 to 69 (KNEEEEKENSNEDGSLSPKSSNTSNI) is disordered. A compositionally biased stretch (polar residues) spans 56-69 (DGSLSPKSSNTSNI). Transmembrane regions (helical) follow at residues 98 to 118 (SALFGIAVTNFVYYYFYELTG), 204 to 224 (FTGIVPALFLVLNPIIQYTIF), and 245 to 265 (LLLGAFGKLIATIITYPYITL). The segment at 274–305 (MTENNEDSEKERTDSVQSLPEDGSDEDNSKEN) is disordered. Transmembrane regions (helical) follow at residues 310–330 (TINKIISKLPSPIVSMFIIGY) and 349–369 (LLQSILNAAFLFYFKEELLIL).

It belongs to the mitochondrial carrier (TC 2.A.29) family.

The protein resides in the peroxisome membrane. In terms of biological role, may have transport activity. This Candida boidinii (Yeast) protein is Peroxisomal membrane protein PMP47B (PMP47B).